Here is a 102-residue protein sequence, read N- to C-terminus: Large ribosomal subunit protein uL24 (102 aa).

This sequence belongs to the universal ribosomal protein uL24 family. As to quaternary structure, part of the 50S ribosomal subunit.

One of two assembly initiator proteins, it binds directly to the 5'-end of the 23S rRNA, where it nucleates assembly of the 50S subunit. Its function is as follows. One of the proteins that surrounds the polypeptide exit tunnel on the outside of the subunit. This is Large ribosomal subunit protein uL24 from Paraburkholderia xenovorans (strain LB400).